Consider the following 360-residue polypeptide: Phosphoserine aminotransferase (360 aa).

Residue Arg41 participates in L-glutamate binding. Pyridoxal 5'-phosphate-binding residues include Trp101, Thr152, Asp172, and Gln195. Lys196 is subject to N6-(pyridoxal phosphate)lysine. 237-238 is a pyridoxal 5'-phosphate binding site; it reads NT.

This sequence belongs to the class-V pyridoxal-phosphate-dependent aminotransferase family. SerC subfamily. Homodimer. Pyridoxal 5'-phosphate is required as a cofactor.

The protein resides in the cytoplasm. The catalysed reaction is O-phospho-L-serine + 2-oxoglutarate = 3-phosphooxypyruvate + L-glutamate. It carries out the reaction 4-(phosphooxy)-L-threonine + 2-oxoglutarate = (R)-3-hydroxy-2-oxo-4-phosphooxybutanoate + L-glutamate. Its pathway is amino-acid biosynthesis; L-serine biosynthesis; L-serine from 3-phospho-D-glycerate: step 2/3. The protein operates within cofactor biosynthesis; pyridoxine 5'-phosphate biosynthesis; pyridoxine 5'-phosphate from D-erythrose 4-phosphate: step 3/5. Catalyzes the reversible conversion of 3-phosphohydroxypyruvate to phosphoserine and of 3-hydroxy-2-oxo-4-phosphonooxybutanoate to phosphohydroxythreonine. The protein is Phosphoserine aminotransferase of Burkholderia cenocepacia (strain HI2424).